The sequence spans 218 residues: N-(5'-phosphoribosyl)anthranilate isomerase (218 aa).

The protein belongs to the TrpF family.

The enzyme catalyses N-(5-phospho-beta-D-ribosyl)anthranilate = 1-(2-carboxyphenylamino)-1-deoxy-D-ribulose 5-phosphate. It functions in the pathway amino-acid biosynthesis; L-tryptophan biosynthesis; L-tryptophan from chorismate: step 3/5. This chain is N-(5'-phosphoribosyl)anthranilate isomerase, found in Desulfatibacillum aliphaticivorans.